The following is a 606-amino-acid chain: Lysosomal cobalamin transporter ABCD4 (606 aa).

The region spanning 39 to 332 (NALMFLTLLC…CFTQLIDLST (294 aa)) is the ABC transmembrane type-1 domain. 5 consecutive transmembrane segments (helical) span residues 43–63 (FLTL…VGLI), 76–96 (LEGF…NSTL), 190–210 (IFGY…PIVM), 279–299 (YLGS…GVYG), and 314–334 (AFVC…STTL). In terms of domain architecture, ABC transporter spans 389-603 (LERVSISAPS…GGGRWELMRI (215 aa)). 421 to 428 (GNTGTGKT) serves as a coordination point for ATP.

The protein belongs to the ABC transporter superfamily. ABCD family. Peroxisomal fatty acyl CoA transporter (TC 3.A.1.203) subfamily. As to quaternary structure, homodimer or heterodimer. Interacts with LMBRD1; this interaction induces the translocation of ABCD4 from the ER to the lysosome membrane. Interacts with LMBRD1 and MMACHC; this interaction ensures the transport of cobalamin from the lysosome to the cytosol. As to expression, ubiquitous.

Its subcellular location is the endoplasmic reticulum membrane. It localises to the lysosome membrane. The catalysed reaction is an R-cob(III)alamin(out) + ATP + H2O = an R-cob(III)alamin(in) + ADP + phosphate + H(+). In terms of biological role, lysosomal membrane protein that transports cobalamin (Vitamin B12) from the lysosomal lumen to the cytosol in an ATP-dependent manner. Targeted by LMBRD1 lysosomal chaperone from the endoplasmic reticulum to the lysosomal membrane. Then forms a complex with lysosomal chaperone LMBRD1 and cytosolic MMACHC to transport cobalamin across the lysosomal membrane. This chain is Lysosomal cobalamin transporter ABCD4, found in Homo sapiens (Human).